The chain runs to 266 residues: Putative carbamate hydrolase RutD (266 aa).

The protein belongs to the AB hydrolase superfamily. Hydrolase RutD family.

The enzyme catalyses carbamate + 2 H(+) = NH4(+) + CO2. Its function is as follows. Involved in pyrimidine catabolism. May facilitate the hydrolysis of carbamate, a reaction that can also occur spontaneously. The chain is Putative carbamate hydrolase RutD from Escherichia coli O157:H7.